The following is a 257-amino-acid chain: 3-methyl-2-oxobutanoate hydroxymethyltransferase (257 aa).

Mg(2+) contacts are provided by Asp42 and Asp86. 3-methyl-2-oxobutanoate contacts are provided by residues 42–43 (DS), Asp86, and Lys116. Position 118 (Glu118) interacts with Mg(2+). Glu185 functions as the Proton acceptor in the catalytic mechanism.

Belongs to the PanB family. In terms of assembly, homodecamer; pentamer of dimers. Mg(2+) serves as cofactor.

It is found in the cytoplasm. It catalyses the reaction 3-methyl-2-oxobutanoate + (6R)-5,10-methylene-5,6,7,8-tetrahydrofolate + H2O = 2-dehydropantoate + (6S)-5,6,7,8-tetrahydrofolate. The protein operates within cofactor biosynthesis; (R)-pantothenate biosynthesis; (R)-pantoate from 3-methyl-2-oxobutanoate: step 1/2. Its function is as follows. Catalyzes the reversible reaction in which hydroxymethyl group from 5,10-methylenetetrahydrofolate is transferred onto alpha-ketoisovalerate to form ketopantoate. This Prochlorococcus marinus (strain MIT 9301) protein is 3-methyl-2-oxobutanoate hydroxymethyltransferase.